An 856-amino-acid chain; its full sequence is Inactive rhomboid protein 2 (856 aa).

The disordered stretch occupies residues 1–115 (MASADKNGGS…PGFRRQASLS (115 aa)). Topologically, residues 1 to 409 (MASADKNGGS…HRPYFTYWLT (409 aa)) are cytoplasmic. Ser-90 carries the post-translational modification Phosphoserine. Positions 94-106 (PRSRWQESSEKRP) are enriched in basic and acidic residues. A phosphoserine mark is found at Ser-113 and Ser-117. The segment at 165–184 (PSQEAPSFQGTESPKPCKMP) is disordered. Residues 191–271 (ARGRAFRHPE…GQRCRVVKRS (81 aa)) form an involved in interaction with FRMD8 region. Residues Ser-323, Ser-325, and Ser-328 each carry the phosphoserine modification. A helical membrane pass occupies residues 410–430 (FVHVIITLLVICTYGIAPVGF). Topologically, residues 431–660 (AQHVTTQLVL…PDQFYRLWLS (230 aa)) are lumenal. Residues 531 to 553 (GPPMDKSDLGQKRTSGAVCHQDP) are disordered. Residues 661–681 (LFLHAGVVHCLVSVVFQMTIL) traverse the membrane as a helical segment. Residues 682–692 (RDLEKLAGWHR) are Cytoplasmic-facing. Residues 693–713 (IAIIFILSGITGNLASAIFLP) traverse the membrane as a helical segment. Over 714-715 (YR) the chain is Lumenal. The chain crosses the membrane as a helical span at residues 716–736 (AEVGPAGSQFGLLACLFVELF). Over 737–747 (QSWPLLERPWK) the chain is Cytoplasmic. A helical membrane pass occupies residues 748–768 (AFLNLSAIVLFLFICGLLPWI). At 769 to 773 (DNIAH) the chain is on the lumenal side. Residues 774 to 794 (IFGFLSGLLLAFAFLPYITFG) traverse the membrane as a helical segment. Residues 795 to 802 (TSDKYRKR) are Cytoplasmic-facing. Residues 803–823 (ALILVSLLAFAGLFAALVLWL) traverse the membrane as a helical segment. Topologically, residues 824–856 (YIYPINWPWIEHLTCFPFTSRFCEKYELDQVLH) are lumenal.

Belongs to the peptidase S54 family. Interacts with EGF. Interacts (via cytoplasmic N-terminus) with FRMD8/iTAP; this interaction leads to mutual protein stabilization. Interacts with ADAM17/TACE. Found in the epidermis and esophageal epithelium.

The protein localises to the endoplasmic reticulum membrane. It localises to the cell membrane. Regulates ADAM17 protease, a sheddase of the epidermal growth factor (EGF) receptor ligands and TNF, thereby plays a role in sleep, cell survival, proliferation, migration and inflammation. Does not exhibit any protease activity on its own. This is Inactive rhomboid protein 2 (RHBDF2) from Homo sapiens (Human).